We begin with the raw amino-acid sequence, 294 residues long: N-acetylmuramic acid 6-phosphate etherase (294 aa).

Residues 54–217 enclose the SIS domain; the sequence is VIQSFEEEGR…STASMIGVGK (164 aa). Catalysis depends on Glu82, which acts as the Proton donor. The active site involves Glu113.

This sequence belongs to the GCKR-like family. MurNAc-6-P etherase subfamily. As to quaternary structure, homodimer.

The enzyme catalyses N-acetyl-D-muramate 6-phosphate + H2O = N-acetyl-D-glucosamine 6-phosphate + (R)-lactate. It participates in amino-sugar metabolism; N-acetylmuramate degradation. Its function is as follows. Specifically catalyzes the cleavage of the D-lactyl ether substituent of MurNAc 6-phosphate, producing GlcNAc 6-phosphate and D-lactate. The polypeptide is N-acetylmuramic acid 6-phosphate etherase (Bacillus thuringiensis subsp. konkukian (strain 97-27)).